The following is a 739-amino-acid chain: Exocyst complex component 3-like protein (739 aa).

The tract at residues 1-370 is mediates interaction with EXOC2, EXOC4 and EXOC5; sequence MDSAARDKTQ…DVSDLEPLLT (370 aa).

This sequence belongs to the SEC6 family. As to quaternary structure, interacts with EXOC2, EXOC4 and EXOC5; may be part of the exocyst.

It is found in the cytoplasmic vesicle. The protein resides in the secretory vesicle. Functionally, as part of the exocyst, may play a role in regulated exocytosis of insulin granules. In Bos taurus (Bovine), this protein is Exocyst complex component 3-like protein (EXOC3L1).